A 275-amino-acid polypeptide reads, in one-letter code: Shikimate dehydrogenase (NADP(+)) (275 aa).

Shikimate contacts are provided by residues 17-19 (SKS) and Thr64. Residue Lys68 is the Proton acceptor of the active site. NADP(+) is bound at residue Glu80. Residues Asn89 and Asp105 each coordinate shikimate. NADP(+) contacts are provided by residues 129–133 (GAGGA), 152–157 (NRTFFK), and Met216. Residue Tyr218 coordinates shikimate. NADP(+) is bound at residue Gly240.

This sequence belongs to the shikimate dehydrogenase family. Homodimer.

It catalyses the reaction shikimate + NADP(+) = 3-dehydroshikimate + NADPH + H(+). The protein operates within metabolic intermediate biosynthesis; chorismate biosynthesis; chorismate from D-erythrose 4-phosphate and phosphoenolpyruvate: step 4/7. Involved in the biosynthesis of the chorismate, which leads to the biosynthesis of aromatic amino acids. Catalyzes the reversible NADPH linked reduction of 3-dehydroshikimate (DHSA) to yield shikimate (SA). This is Shikimate dehydrogenase (NADP(+)) from Pectobacterium atrosepticum (strain SCRI 1043 / ATCC BAA-672) (Erwinia carotovora subsp. atroseptica).